Reading from the N-terminus, the 466-residue chain is MAVTINTELDPVFLKALGYLHSKSKDSAEKLKALLDESLCKGNDSVYRPQPKEMEQPKAMLSKVKPETKASSSTPSSSMLSKPLTSEKLKKEAEKRSADKMKVEISDVMDIPKKPRIEKTEARSSPVTVQLSKDLPVPDLSSFDETSADDFAMEMGLACVVCRQMTVFSGNQLVECQECHNLYHQDCHKPQVTDKDVNDPRLVWYCARCTRQMKRMAQKNQKPSQKPSPSAVSAVTPVAKDPSVNKPELKAKPDSANTFLAFKRAEVKASSAVSSSSSNSGVSSSSASGLTGWAAFGAKTANAVPVLGKLGTSSQATSGKPPSLSSVQKTGAAPGLAPSKPGSVSKSGSGGSSSSSTIPIKPLPPLILGKTGLSRSMSSDNVSKTGLPSPNPSSAGSVSSLSSQLGSNNGSSSAAGSNVTSSNKVAVDPSMQLSGAKGPTSQESQLNAMKRLQMVKKKAAQKKLKK.

The tract at residues 41–101 is disordered; that stretch reads KGNDSVYRPQ…EAEKRSADKM (61 aa). Residues 69 to 84 are compositionally biased toward low complexity; sequence KASSSTPSSSMLSKPL. Positions 85–101 are enriched in basic and acidic residues; it reads TSEKLKKEAEKRSADKM. Residues 156-212 form a PHD-type zinc finger; sequence GLACVVCRQMTVFSGNQLVECQECHNLYHQDCHKPQVTDKDVNDPRLVWYCARCTRQ. 2 disordered regions span residues 216 to 251 and 311 to 466; these read MAQKNQKPSQKPSPSAVSAVTPVAKDPSVNKPELKA and GTSS…KLKK. 2 stretches are compositionally biased toward polar residues: residues 218–233 and 311–329; these read QKNQKPSQKPSPSAVS and GTSSQATSGKPPSLSSVQK. Residues 338 to 373 are compositionally biased toward low complexity; the sequence is PSKPGSVSKSGSGGSSSSSTIPIKPLPPLILGKTGL. Residues 374-386 show a composition bias toward polar residues; the sequence is SRSMSSDNVSKTG. Residues 392–423 show a composition bias toward low complexity; that stretch reads PSSAGSVSSLSSQLGSNNGSSSAAGSNVTSSN. Positions 453 to 466 are enriched in basic residues; that stretch reads QMVKKKAAQKKLKK.

The protein belongs to the Integrator subunit 12 family. Component of the Integrator complex, composed of core subunits INTS1, INTS2, INTS3, INTS4, INTS5, INTS6, INTS7, INTS8, INTS9/RC74, INTS10, INTS11/CPSF3L, INTS12, INTS13, INTS14 and INTS15. The core complex associates with protein phosphatase 2A subunits PPP2CA and PPP2R1A, to form the Integrator-PP2A (INTAC) complex.

The protein resides in the nucleus. In terms of biological role, component of the integrator complex, a multiprotein complex that terminates RNA polymerase II (Pol II) transcription in the promoter-proximal region of genes. The integrator complex provides a quality checkpoint during transcription elongation by driving premature transcription termination of transcripts that are unfavorably configured for transcriptional elongation: the complex terminates transcription by (1) catalyzing dephosphorylation of the C-terminal domain (CTD) of Pol II subunit POLR2A/RPB1 and SUPT5H/SPT5, (2) degrading the exiting nascent RNA transcript via endonuclease activity and (3) promoting the release of Pol II from bound DNA. The integrator complex is also involved in terminating the synthesis of non-coding Pol II transcripts, such as enhancer RNAs (eRNAs), small nuclear RNAs (snRNAs), telomerase RNAs and long non-coding RNAs (lncRNAs). The sequence is that of Integrator complex subunit 12 (ints12) from Xenopus tropicalis (Western clawed frog).